Here is a 606-residue protein sequence, read N- to C-terminus: Kelch-like protein 26 (606 aa).

Residues 1-19 (MAESGGSSGSSQSPERPSS) show a composition bias toward low complexity. Residues 1-20 (MAESGGSSGSSQSPERPSSL) are disordered. At alanine 2 the chain carries N-acetylalanine. The BTB domain maps to 54–121 (LDVVLTVNSE…AYSAEVTLDL (68 aa)). One can recognise a BACK domain in the interval 156-257 (CLHIGQMATT…QPAELVDSVQ (102 aa)). 6 Kelch repeats span residues 301–352 (SLVA…VLDN), 353–404 (FVYV…ALGG), 406–451 (LYAT…AAAG), 452–499 (RLYI…GAAG), 501–550 (IYAL…LLER), and 552–599 (IYIV…AVLL). Serine 430 carries the phosphoserine modification.

Functionally, may play a role in endo(sarco)plasmic reticulum (ER/SR) mitochondrial signaling. May be part of the ubiquitin-proteasome system (UPS) and affect ubiquitination and degradation of target substrates in cardiomyocytes. This Mus musculus (Mouse) protein is Kelch-like protein 26 (Klhl26).